The primary structure comprises 187 residues: Adenine phosphoribosyltransferase (187 aa).

It belongs to the purine/pyrimidine phosphoribosyltransferase family. In terms of assembly, homodimer.

Its subcellular location is the cytoplasm. The enzyme catalyses AMP + diphosphate = 5-phospho-alpha-D-ribose 1-diphosphate + adenine. Its pathway is purine metabolism; AMP biosynthesis via salvage pathway; AMP from adenine: step 1/1. In terms of biological role, catalyzes a salvage reaction resulting in the formation of AMP, that is energically less costly than de novo synthesis. The polypeptide is Adenine phosphoribosyltransferase (Yersinia enterocolitica serotype O:8 / biotype 1B (strain NCTC 13174 / 8081)).